Here is a 225-residue protein sequence, read N- to C-terminus: MSGKTELKPGRTKSRSAIVLAGGRGRRMGMVEKALLEFEGKTILERLLENLFRVVDEVILSVRDIPQKEKLLPVLEKFPDREIRFCFDSREDAGPLEGIRAGLLESRSEYSFVCAGDMPFVNSEIVDLLFEKANGHDAALPRWEEDRMYEPLHAVYSRKMLLEIEKTFEGERNSVLTPVFAMKDVVFVEVSEIRGIDPELRTFANINTVEDIESMIGSVVGKVEL.

Residues 20 to 22 (LAG), lysine 33, aspartate 88, and aspartate 117 each bind GTP. Residue aspartate 117 participates in Mg(2+) binding.

This sequence belongs to the MobA family. Requires Mg(2+) as cofactor.

The protein localises to the cytoplasm. The catalysed reaction is Mo-molybdopterin + GTP + H(+) = Mo-molybdopterin guanine dinucleotide + diphosphate. Functionally, transfers a GMP moiety from GTP to Mo-molybdopterin (Mo-MPT) cofactor (Moco or molybdenum cofactor) to form Mo-molybdopterin guanine dinucleotide (Mo-MGD) cofactor. In Methanosarcina acetivorans (strain ATCC 35395 / DSM 2834 / JCM 12185 / C2A), this protein is Probable molybdenum cofactor guanylyltransferase.